The chain runs to 481 residues: Protein nucleotidyltransferase YdiU (481 aa).

The ATP site is built by G87, G89, R90, K110, D122, G123, R173, and R180. The active-site Proton acceptor is D249. The Mg(2+) site is built by N250 and D259. D259 contributes to the ATP binding site.

Belongs to the SELO family. Mg(2+) is required as a cofactor. The cofactor is Mn(2+).

It catalyses the reaction L-seryl-[protein] + ATP = 3-O-(5'-adenylyl)-L-seryl-[protein] + diphosphate. The enzyme catalyses L-threonyl-[protein] + ATP = 3-O-(5'-adenylyl)-L-threonyl-[protein] + diphosphate. It carries out the reaction L-tyrosyl-[protein] + ATP = O-(5'-adenylyl)-L-tyrosyl-[protein] + diphosphate. The catalysed reaction is L-histidyl-[protein] + UTP = N(tele)-(5'-uridylyl)-L-histidyl-[protein] + diphosphate. It catalyses the reaction L-seryl-[protein] + UTP = O-(5'-uridylyl)-L-seryl-[protein] + diphosphate. The enzyme catalyses L-tyrosyl-[protein] + UTP = O-(5'-uridylyl)-L-tyrosyl-[protein] + diphosphate. Nucleotidyltransferase involved in the post-translational modification of proteins. It can catalyze the addition of adenosine monophosphate (AMP) or uridine monophosphate (UMP) to a protein, resulting in modifications known as AMPylation and UMPylation. The sequence is that of Protein nucleotidyltransferase YdiU from Mycobacterium sp. (strain KMS).